Reading from the N-terminus, the 1462-residue chain is Gag-Pol polyprotein (1462 aa).

Gly-2 carries N-myristoyl glycine; by host lipidation. The interval 7–31 is interaction with Gp41; it reads VLRGKKADELEKIRLRPGGKKKYRL. Positions 16 to 22 match the Nuclear export signal motif; that stretch reads LEKIRLR. The Nuclear localization signal signature appears at 26 to 32; sequence KKKYRLK. Residues 191 to 228 form an interaction with human PPIA/CYPA and NUP153 region; sequence NCVGDHQAAMQIIREIINEEAADWDVQHPIPGPLPAGQ. The dimerization/Multimerization of capsid protein p24 stretch occupies residues 279-364; sequence YNPTNILDIK…GGPGQKARLM (86 aa). 2 CCHC-type zinc fingers span residues 388 to 405 and 409 to 426; these read IKCWNCGKEGHSARQCRA and QGCWKCGKSGHIMANCPD. The tract at residues 441-507 is disordered; sequence APQLPRGPKF…RRDTTQRDDR (67 aa). Residues 454–468 are compositionally biased toward low complexity; it reads NTNSTPNGSSSGPTG. Composition is skewed to basic and acidic residues over residues 471 to 490 and 497 to 507; these read HAAREKTERAETKTIQRSDR and ARRDTTQRDDR. The tract at residues 512–516 is dimerization of protease; sequence PQFSL. One can recognise a Peptidase A2 domain in the interval 531–600; that stretch reads VEVLLDTGAD…TPINIFGRNI (70 aa). The active-site For protease activity; shared with dimeric partner is the Asp-536. Dimerization of protease stretches follow at residues 560–566 and 599–611; these read GIGGFIN and NILTALGMSLNLP. In terms of domain architecture, Reverse transcriptase spans 654–844; sequence EGQLEEAPPT…PPYQWMGYEL (191 aa). Mg(2+) is bound by residues Asp-720, Asp-795, and Asp-796. An RT 'primer grip' region spans residues 837-845; that stretch reads YQWMGYELW. The Tryptophan repeat motif motif lies at 1007-1023; that stretch reads WEQWWDNYWQVTWIPDW. One can recognise an RNase H type-1 domain in the interval 1043–1166; sequence IPGAETFYTD…IDHLVSQGIR (124 aa). Mg(2+)-binding residues include Asp-1052, Glu-1087, Asp-1107, and Asp-1158. The Integrase-type zinc finger occupies 1172 to 1213; it reads ERIEPAQEEHGKYHSNVKELAHKFGLPNLVARQIVNTCAQCQ. The Zn(2+) site is built by His-1181, His-1185, Cys-1209, and Cys-1212. Positions 1222 to 1373 constitute an Integrase catalytic domain; sequence QVNAELGTWQ…TPVERLVNMI (152 aa). Mg(2+) is bound by residues Asp-1233, Asp-1285, and Glu-1321. The integrase-type DNA-binding region spans 1392–1439; it reads FRVYFREGRNQLWQGPGELLWKGDGAVIVKVGTDIKVIPRRKAKIIRD. A disordered region spans residues 1443–1462; it reads RQEMDSGSHLEGAREDGEMA.

In terms of assembly, homotrimer; further assembles as hexamers of trimers. Interacts with gp41 (via C-terminus). Interacts with host CALM1; this interaction induces a conformational change in the Matrix protein, triggering exposure of the myristate group. Interacts with host AP3D1; this interaction allows the polyprotein trafficking to multivesicular bodies during virus assembly. Part of the pre-integration complex (PIC) which is composed of viral genome, matrix protein, Vpr and integrase. Homodimer; the homodimer further multimerizes as homohexamers or homopentamers. Interacts with human PPIA/CYPA. Interacts with human NUP153. Interacts with host PDZD8; this interaction stabilizes the capsid. Interacts with monkey TRIM5; this interaction destabilizes the capsid. As to quaternary structure, homodimer, whose active site consists of two apposed aspartic acid residues. In terms of assembly, heterodimer of p66 RT and p51 RT (RT p66/p51). Heterodimerization of RT is essential for DNA polymerase activity. The overall folding of the subdomains is similar in p66 RT and p51 RT but the spatial arrangements of the subdomains are dramatically different. Homotetramer; may further associate as a homohexadecamer. Part of the pre-integration complex (PIC) which is composed of viral genome, matrix protein, Vpr and integrase. Interacts with human SMARCB1/INI1 and human PSIP1/LEDGF isoform 1. Interacts with human KPNA3; this interaction might play a role in nuclear import of the pre-integration complex. Interacts with human NUP153; this interaction might play a role in nuclear import of the pre-integration complex. It depends on Mg(2+) as a cofactor. In terms of processing, specific enzymatic cleavages by the viral protease yield mature proteins. The protease is released by autocatalytic cleavage. The polyprotein is cleaved during and after budding, this process is termed maturation. Proteolytic cleavage of p66 RT removes the RNase H domain to yield the p51 RT subunit. Nucleocapsid protein p7 might be further cleaved after virus entry.

It localises to the host cell membrane. The protein localises to the host endosome. It is found in the host multivesicular body. Its subcellular location is the virion membrane. The protein resides in the host nucleus. It localises to the host cytoplasm. The protein localises to the virion. The catalysed reaction is Endopeptidase for which the P1 residue is preferably hydrophobic.. It catalyses the reaction Endohydrolysis of RNA in RNA/DNA hybrids. Three different cleavage modes: 1. sequence-specific internal cleavage of RNA. Human immunodeficiency virus type 1 and Moloney murine leukemia virus enzymes prefer to cleave the RNA strand one nucleotide away from the RNA-DNA junction. 2. RNA 5'-end directed cleavage 13-19 nucleotides from the RNA end. 3. DNA 3'-end directed cleavage 15-20 nucleotides away from the primer terminus.. It carries out the reaction 3'-end directed exonucleolytic cleavage of viral RNA-DNA hybrid.. The enzyme catalyses DNA(n) + a 2'-deoxyribonucleoside 5'-triphosphate = DNA(n+1) + diphosphate. Protease: The viral protease is inhibited by many synthetic protease inhibitors (PIs), such as amprenavir, atazanavir, indinavir, loprinavir, nelfinavir, ritonavir and saquinavir. Use of protease inhibitors in tritherapy regimens permit more ambitious therapeutic strategies. Reverse transcriptase/ribonuclease H: RT can be inhibited either by nucleoside RT inhibitors (NRTIs) or by non nucleoside RT inhibitors (NNRTIs). NRTIs act as chain terminators, whereas NNRTIs inhibit DNA polymerization by binding a small hydrophobic pocket near the RT active site and inducing an allosteric change in this region. Classical NRTIs are abacavir, adefovir (PMEA), didanosine (ddI), lamivudine (3TC), stavudine (d4T), tenofovir (PMPA), zalcitabine (ddC), and zidovudine (AZT). Classical NNRTIs are atevirdine (BHAP U-87201E), delavirdine, efavirenz (DMP-266), emivirine (I-EBU), and nevirapine (BI-RG-587). The tritherapies used as a basic effective treatment of AIDS associate two NRTIs and one NNRTI. Functionally, mediates, with Gag polyprotein, the essential events in virion assembly, including binding the plasma membrane, making the protein-protein interactions necessary to create spherical particles, recruiting the viral Env proteins, and packaging the genomic RNA via direct interactions with the RNA packaging sequence (Psi). Gag-Pol polyprotein may regulate its own translation, by the binding genomic RNA in the 5'-UTR. At low concentration, the polyprotein would promote translation, whereas at high concentration, the polyprotein would encapsidate genomic RNA and then shut off translation. In terms of biological role, targets the polyprotein to the plasma membrane via a multipartite membrane-binding signal, that includes its myristoylated N-terminus. Matrix protein is part of the pre-integration complex. Implicated in the release from host cell mediated by Vpu. Binds to RNA. Its function is as follows. Forms the conical core that encapsulates the genomic RNA-nucleocapsid complex in the virion. Most core are conical, with only 7% tubular. The core is constituted by capsid protein hexamer subunits. The core is disassembled soon after virion entry. Host restriction factors such as TRIM5-alpha or TRIMCyp bind retroviral capsids and cause premature capsid disassembly, leading to blocks in reverse transcription. Capsid restriction by TRIM5 is one of the factors which restricts HIV-1 to the human species. Host PIN1 apparently facilitates the virion uncoating. On the other hand, interactions with PDZD8 or CYPA stabilize the capsid. Encapsulates and protects viral dimeric unspliced genomic RNA (gRNA). Binds these RNAs through its zinc fingers. Acts as a nucleic acid chaperone which is involved in rearangement of nucleic acid secondary structure during gRNA retrotranscription. Also facilitates template switch leading to recombination. As part of the polyprotein, participates in gRNA dimerization, packaging, tRNA incorporation and virion assembly. Functionally, aspartyl protease that mediates proteolytic cleavages of Gag and Gag-Pol polyproteins during or shortly after the release of the virion from the plasma membrane. Cleavages take place as an ordered, step-wise cascade to yield mature proteins. This process is called maturation. Displays maximal activity during the budding process just prior to particle release from the cell. Also cleaves Nef and Vif, probably concomitantly with viral structural proteins on maturation of virus particles. Hydrolyzes host EIF4GI and PABP1 in order to shut off the capped cellular mRNA translation. The resulting inhibition of cellular protein synthesis serves to ensure maximal viral gene expression and to evade host immune response. In terms of biological role, multifunctional enzyme that converts the viral RNA genome into dsDNA in the cytoplasm, shortly after virus entry into the cell. This enzyme displays a DNA polymerase activity that can copy either DNA or RNA templates, and a ribonuclease H (RNase H) activity that cleaves the RNA strand of RNA-DNA heteroduplexes in a partially processive 3' to 5' endonucleasic mode. Conversion of viral genomic RNA into dsDNA requires many steps. A tRNA(3)-Lys binds to the primer-binding site (PBS) situated at the 5'-end of the viral RNA. RT uses the 3' end of the tRNA primer to perform a short round of RNA-dependent minus-strand DNA synthesis. The reading proceeds through the U5 region and ends after the repeated (R) region which is present at both ends of viral RNA. The portion of the RNA-DNA heteroduplex is digested by the RNase H, resulting in a ssDNA product attached to the tRNA primer. This ssDNA/tRNA hybridizes with the identical R region situated at the 3' end of viral RNA. This template exchange, known as minus-strand DNA strong stop transfer, can be either intra- or intermolecular. RT uses the 3' end of this newly synthesized short ssDNA to perform the RNA-dependent minus-strand DNA synthesis of the whole template. RNase H digests the RNA template except for two polypurine tracts (PPTs) situated at the 5'-end and near the center of the genome. It is not clear if both polymerase and RNase H activities are simultaneous. RNase H probably can proceed both in a polymerase-dependent (RNA cut into small fragments by the same RT performing DNA synthesis) and a polymerase-independent mode (cleavage of remaining RNA fragments by free RTs). Secondly, RT performs DNA-directed plus-strand DNA synthesis using the PPTs that have not been removed by RNase H as primers. PPTs and tRNA primers are then removed by RNase H. The 3' and 5' ssDNA PBS regions hybridize to form a circular dsDNA intermediate. Strand displacement synthesis by RT to the PBS and PPT ends produces a blunt ended, linear dsDNA copy of the viral genome that includes long terminal repeats (LTRs) at both ends. Its function is as follows. Catalyzes viral DNA integration into the host chromosome, by performing a series of DNA cutting and joining reactions. This enzyme activity takes place after virion entry into a cell and reverse transcription of the RNA genome in dsDNA. The first step in the integration process is 3' processing. This step requires a complex comprising the viral genome, matrix protein, Vpr and integrase. This complex is called the pre-integration complex (PIC). The integrase protein removes 2 nucleotides from each 3' end of the viral DNA, leaving recessed CA OH's at the 3' ends. In the second step, the PIC enters cell nucleus. This process is mediated through integrase and Vpr proteins, and allows the virus to infect a non dividing cell. This ability to enter the nucleus is specific of lentiviruses, other retroviruses cannot and rely on cell division to access cell chromosomes. In the third step, termed strand transfer, the integrase protein joins the previously processed 3' ends to the 5' ends of strands of target cellular DNA at the site of integration. The 5'-ends are produced by integrase-catalyzed staggered cuts, 5 bp apart. A Y-shaped, gapped, recombination intermediate results, with the 5'-ends of the viral DNA strands and the 3' ends of target DNA strands remaining unjoined, flanking a gap of 5 bp. The last step is viral DNA integration into host chromosome. This involves host DNA repair synthesis in which the 5 bp gaps between the unjoined strands are filled in and then ligated. Since this process occurs at both cuts flanking the HIV genome, a 5 bp duplication of host DNA is produced at the ends of HIV-1 integration. Alternatively, Integrase may catalyze the excision of viral DNA just after strand transfer, this is termed disintegration. This is Gag-Pol polyprotein (gag-pol) from Human immunodeficiency virus type 2 subtype A (isolate SBLISY) (HIV-2).